The sequence spans 2112 residues: Phenolphthiocerol synthesis polyketide synthase type I Pks15/1 (2112 aa).

One can recognise a Ketosynthase family 3 (KS3) domain in the interval 46-469; it reads TEPVAVVGIG…GTNAHLILEE (424 aa). Active-site for beta-ketoacyl synthase activity residues include C216, H351, and H391. The interval 579–893 is acyltransferase; sequence TVVVFPGQGA…GQVFTTGVPV (315 aa). S670 (for acyltransferase activity) is an active-site residue. The interval 941–1063 is N-terminal hotdog fold; sequence HALLGAVVER…GMLGVAAAET (123 aa). Residues 941 to 1101 are dehydratase; that stretch reads HALLGAVVER…YAYGPAFQGL (161 aa). Positions 941–1215 constitute a PKS/mFAS DH domain; it reads HALLGAVVER…TRPITAEQLR (275 aa). The Proton acceptor; for dehydratase activity role is filled by H973. Residues 1075 to 1215 form a C-terminal hotdog fold region; that stretch reads AESVDISDGY…TRPITAEQLR (141 aa). D1136 functions as the Proton donor; for dehydratase activity in the catalytic mechanism. Residues 1406 to 1711 form an enoylreductase region; it reads GTLEDLVIQP…QARHIGKVVL (306 aa). Residues 1536-1553 and 1725-1740 contribute to the NADP(+) site; these read VLIH…VQLA and TVVI…GVLA. Positions 1724–1905 are beta-ketoacyl reductase; it reads GTVVITGATG…SLAWGLWEQP (182 aa). The 76-residue stretch at 2010-2085 folds into the Carrier domain; the sequence is ELLVGLVCLQ…AVAEYVAQQM (76 aa). S2045 is subject to O-(pantetheine 4'-phosphoryl)serine. Residues 2084 to 2100 show a composition bias toward polar residues; it reads QMSGSRPTESGDPTSQV. Residues 2084–2112 are disordered; that stretch reads QMSGSRPTESGDPTSQVVEPAAAEVSVHA.

This sequence belongs to the thiolase-like superfamily. Beta-ketoacyl-ACP synthases family. Pantetheine 4'-phosphate is required as a cofactor.

The catalysed reaction is a fatty acyl-[ACP] + malonyl-[ACP] + H(+) = a 3-oxoacyl-[ACP] + holo-[ACP] + CO2. The protein operates within lipid metabolism; fatty acid biosynthesis. Catalyzes the elongation by iterative transfer of p-hydroxybenzoyl group from FadD22 (pHBA-S-FAdD22) to form p-hydroxyphenylalkanoate (pHPA) intermediates during phenolphthiocerol (PPOL) biosynthesis. PPOL is an important intermediate in the biosynthesis of phenolic glycolipid (mycosid B). The polypeptide is Phenolphthiocerol synthesis polyketide synthase type I Pks15/1 (pks15/1) (Mycobacterium bovis (strain ATCC BAA-935 / AF2122/97)).